The following is a 130-amino-acid chain: Small ribosomal subunit protein uS11 (130 aa).

Positions 109-130 (EDITPIPHDGTGRPGGKRGRRV) are disordered.

The protein belongs to the universal ribosomal protein uS11 family. Part of the 30S ribosomal subunit.

Located on the platform of the 30S subunit. This Methanobrevibacter smithii (strain ATCC 35061 / DSM 861 / OCM 144 / PS) protein is Small ribosomal subunit protein uS11.